We begin with the raw amino-acid sequence, 88 residues long: Large ribosomal subunit protein bL31B (88 aa).

It belongs to the bacterial ribosomal protein bL31 family. Type B subfamily. In terms of assembly, part of the 50S ribosomal subunit.

This Bordetella bronchiseptica (strain ATCC BAA-588 / NCTC 13252 / RB50) (Alcaligenes bronchisepticus) protein is Large ribosomal subunit protein bL31B.